A 459-amino-acid chain; its full sequence is Cyclin-dependent kinase F-4 (459 aa).

Positions 4–283 (FKMIKEVGDG…AAEVLQHTFF (280 aa)) constitute a Protein kinase domain. ATP-binding positions include 10–18 (VGDGTFGSV) and Lys-33. The active-site Proton acceptor is the Asp-125. Ser-151 carries the phosphoserine modification. The residue at position 156 (Thr-156) is a Phosphothreonine. The disordered stretch occupies residues 310-397 (KGVSEHGMPR…RHSRSLPETG (88 aa)). 2 stretches are compositionally biased toward polar residues: residues 322-346 (STGT…SKTG) and 366-375 (ESNNKLTTNR).

The protein belongs to the protein kinase superfamily. CMGC Ser/Thr protein kinase family. CDC2/CDKX subfamily.

It catalyses the reaction L-seryl-[protein] + ATP = O-phospho-L-seryl-[protein] + ADP + H(+). It carries out the reaction L-threonyl-[protein] + ATP = O-phospho-L-threonyl-[protein] + ADP + H(+). The catalysed reaction is [DNA-directed RNA polymerase] + ATP = phospho-[DNA-directed RNA polymerase] + ADP + H(+). This Oryza sativa subsp. japonica (Rice) protein is Cyclin-dependent kinase F-4 (CDKF-4).